The primary structure comprises 198 residues: Cyclin-dependent kinase inhibitor 1B (198 aa).

Polar residues predominate over residues 1 to 11 (MSNVRVSNGSP). The interval 1-22 (MSNVRVSNGSPSLERMDARQAE) is disordered. The residue at position 10 (Ser10) is a Phosphoserine; by UHMK1. The interaction with CDK2 stretch occupies residues 51-91 (DMEEASQRKWNFDFQNHKPLEGKYEWQEVEKGSLPEFYYRP). Tyr74 is subject to Phosphotyrosine; by SRC. Residues 87-198 (FYYRPPRPPK…KKPGLRRRQT (112 aa)) form a disordered region. Tyr88 carries the post-translational modification Phosphotyrosine; by ABL, LYN and SRC. Tyr89 is subject to Phosphotyrosine. Over residues 104 to 113 (QESQDVSGNR) the composition is skewed to polar residues. The span at 126–137 (EDTHLVDQKTDT) shows a compositional bias: basic and acidic residues. The Nuclear localization signal motif lies at 153–169 (KRPATDDSSPQNKRANR). Phosphothreonine; by CaMK1, PKB/AKT1 and PIM1 is present on Thr157. Residue Thr170 is modified to Phosphothreonine. The span at 175 to 186 (SDGSPNAGSVEQ) shows a compositional bias: polar residues. Thr187 bears the Phosphothreonine; by PKB/AKT1, CDK1 and CDK2 mark. Thr198 bears the Phosphothreonine; by CaMK1, PKB/AKT1, RPS6KA1, RPS6KA3 and PIM1 mark.

The protein belongs to the CDI family. As to quaternary structure, forms a ternary complex composed of CCNE1, CDK2 and CDKN1B. Interacts directly with CCNE1; the interaction is inhibited by CDK2-dependent phosphorylation on Thr-187. Interacts with COPS5, subunit of the COP9 signalosome complex; the interaction leads to CDKN1B degradation. Interacts with NUP50; the interaction leads to nuclear import and degradation of phosphorylated CDKN1B. Interacts with CCND1 and SNX6. Interacts (Thr-198-phosphorylated form) with 14-3-3 proteins, binds strongly YWHAQ, weakly YWHAE and YWHAH, but not YWHAB nor YWHAZ; the interaction with YWHAQ results in translocation to the cytoplasm. Interacts with AKT1 and LYN; the interactions lead to cytoplasmic mislocation, phosphorylation of CDKN1B and inhibition of cell cycle arrest. Forms a ternary complex with CCNA2 and CDK2; CDKN1B inhibits the kinase activity of CDK2 through conformational rearrangements. Interacts (unphosphorylated form) with CDK2. Forms a complex with CDK2 and SPDYA, but does not directly interact with SPDYA. Forms a ternary complex composed of cyclin D, CDK4 and CDKN1B. Interacts (phosphorylated on Tyr-88 and Tyr-89) with CDK4; the interaction is required for cyclin D and CDK4 complex assembly, induces nuclear translocation and activates the CDK4 kinase activity. Interacts with GRB2. Interacts with PIM1. Identified in a complex with SKP1, SKP2 and CKS1B. Interacts with UHMK1; the interaction leads to cytoplasmic mislocation, phosphorylation of CDKN1B and inhibition of cell cycle arrest. Also interacts with CDK1. Dephosphorylated on Thr-187 by PPM1H, leading to CDKN1B stability. Phosphorylated; phosphorylation occurs on serine, threonine and tyrosine residues. Phosphorylation on Ser-10 is the major site of phosphorylation in resting cells, takes place at the G(0)-G(1) phase and leads to protein stability. Phosphorylation on other sites is greatly enhanced by mitogens, growth factors, cMYC and in certain cancer cell lines. The phosphorylated form found in the cytoplasm is inactivate. Phosphorylation on Thr-198 is required for interaction with 14-3-3 proteins. Phosphorylation on Thr-187, by CDK1 and CDK2 leads to protein ubiquitination and proteasomal degradation. Tyrosine phosphorylation promotes this process. Phosphorylation by PKB/AKT1 can be suppressed by LY294002, an inhibitor of the catalytic subunit of PI3K. Phosphorylation on Tyr-88 and Tyr-89 has no effect on binding CDK2, but is required for binding CDK4. Dephosphorylated on tyrosine residues by G-CSF. Dephosphorylated on Thr-187 by PPM1H, leading to CDKN1B stability. Post-translationally, ubiquitinated; in the cytoplasm by the KPC complex (composed of RNF123/KPC1 and UBAC1/KPC2) and, in the nucleus, by SCF(SKP2). The latter requires prior phosphorylation on Thr-187. Ubiquitinated; by a TRIM21-containing SCF(SKP2)-like complex; leads to its degradation. In terms of processing, subject to degradation in the lysosome. Interaction with SNX6 promotes lysosomal degradation.

The protein localises to the nucleus. Its subcellular location is the cytoplasm. The protein resides in the endosome. Its function is as follows. Important regulator of cell cycle progression. Inhibits the kinase activity of CDK2 bound to cyclin A, but has little inhibitory activity on CDK2 bound to SPDYA. Involved in G1 arrest. Potent inhibitor of cyclin E- and cyclin A-CDK2 complexes. Forms a complex with cyclin type D-CDK4 complexes and is involved in the assembly, stability, and modulation of CCND1-CDK4 complex activation. Acts either as an inhibitor or an activator of cyclin type D-CDK4 complexes depending on its phosphorylation state and/or stoichometry. This is Cyclin-dependent kinase inhibitor 1B (CDKN1B) from Felis catus (Cat).